The sequence spans 217 residues: Protein-L-isoaspartate O-methyltransferase 2 (217 aa).

Ser62 is a catalytic residue.

Belongs to the methyltransferase superfamily. L-isoaspartyl/D-aspartyl protein methyltransferase family.

Its subcellular location is the cytoplasm. It catalyses the reaction [protein]-L-isoaspartate + S-adenosyl-L-methionine = [protein]-L-isoaspartate alpha-methyl ester + S-adenosyl-L-homocysteine. Its function is as follows. Catalyzes the methyl esterification of L-isoaspartyl residues in peptides and proteins that result from spontaneous decomposition of normal L-aspartyl and L-asparaginyl residues. It plays a role in the repair and/or degradation of damaged proteins. The chain is Protein-L-isoaspartate O-methyltransferase 2 from Geotalea uraniireducens (strain Rf4) (Geobacter uraniireducens).